Consider the following 427-residue polypeptide: tRNA(Ile)-lysidine synthase (427 aa).

21-26 contacts ATP; sequence SGGADS.

This sequence belongs to the tRNA(Ile)-lysidine synthase family.

The protein resides in the cytoplasm. It carries out the reaction cytidine(34) in tRNA(Ile2) + L-lysine + ATP = lysidine(34) in tRNA(Ile2) + AMP + diphosphate + H(+). Its function is as follows. Ligates lysine onto the cytidine present at position 34 of the AUA codon-specific tRNA(Ile) that contains the anticodon CAU, in an ATP-dependent manner. Cytidine is converted to lysidine, thus changing the amino acid specificity of the tRNA from methionine to isoleucine. This chain is tRNA(Ile)-lysidine synthase, found in Actinobacillus succinogenes (strain ATCC 55618 / DSM 22257 / CCUG 43843 / 130Z).